The primary structure comprises 209 residues: MSKVHVFDHPLIQHKLSYIRDMNTGTKEFRELVDEVGMLMAYEVTRDLELQDVEIKTPVTTMTAKRLAGKKLAIVPILRAGLGMTDGVLSLVPAARVGHIGLYRDPNTLKAVEYFAKLPQDIDERQIIVVDPMLATGASAIEAINSLKKRGAKNIRFMCLIAAPEGVEKMQEAHDDVDIYIAALDEKLNDKAYITPGLGDAGDRLFGTK.

5-phospho-alpha-D-ribose 1-diphosphate-binding positions include arginine 79, arginine 104, and aspartate 131–serine 139. Residues isoleucine 194 and glycine 199–alanine 201 contribute to the uracil site. A 5-phospho-alpha-D-ribose 1-diphosphate-binding site is contributed by aspartate 200.

Belongs to the UPRTase family. Mg(2+) is required as a cofactor.

It carries out the reaction UMP + diphosphate = 5-phospho-alpha-D-ribose 1-diphosphate + uracil. Its pathway is pyrimidine metabolism; UMP biosynthesis via salvage pathway; UMP from uracil: step 1/1. Its activity is regulated as follows. Allosterically activated by GTP. In terms of biological role, catalyzes the conversion of uracil and 5-phospho-alpha-D-ribose 1-diphosphate (PRPP) to UMP and diphosphate. The chain is Uracil phosphoribosyltransferase from Staphylococcus haemolyticus (strain JCSC1435).